The primary structure comprises 252 residues: Cyclic di-GMP binding protein VCA0042 (252 aa).

The span at 1–11 (MNSRPAEKIDN) shows a compositional bias: basic and acidic residues. Residues 1-24 (MNSRPAEKIDNNDGQTETPRSKTV) are disordered. Positions 12–24 (NDGQTETPRSKTV) are enriched in polar residues. The PilZ domain maps to 134-233 (QLRKEPRFEL…EEGRNNAKNL (100 aa)).

This sequence belongs to the YcgR family. As to quaternary structure, dimer.

The protein resides in the bacterial flagellum basal body. In terms of biological role, may act as a flagellar brake, regulating swimming and swarming in a bis-(3'-5') cyclic diguanylic acid (c-di-GMP)-dependent manner. Increasing levels of c-di-GMP lead to decreased motility (Potential). Binds bis-(3'-5') cyclic diguanylic acid (c-di-GMP) with a dissociation constant of 170 nM in the presence of 10 mM KCl and with 100 nM in its absence. Binds 1 to 2 c-di-GMP per subunit. Only 1 c-di-GMP is seen in the wild-type crystal, while 2 are seen in the mutant. Depending on the concentration of K(+) stoichiometries of 1:1, 1.43:1 and 2:1 are determined by isothermal titration calorimetry. The sequence is that of Cyclic di-GMP binding protein VCA0042 from Vibrio cholerae serotype O1 (strain ATCC 39315 / El Tor Inaba N16961).